The following is a 347-amino-acid chain: Glucose 1-dehydrogenase (347 aa).

Residue Cys39 coordinates Zn(2+). Thr41 contributes to the substrate binding site. Zn(2+) contacts are provided by His64 and Glu65. Substrate-binding residues include Glu110 and Glu146. Position 146 (Glu146) interacts with Zn(2+). Residues 178–181, 260–262, and 289–291 contribute to the NADP(+) site; these read AGPV, LGV, and SVN. Residue Asn291 participates in substrate binding.

It belongs to the zinc-containing alcohol dehydrogenase family. Glucose 1-dehydrogenase subfamily. Homodimer. The cofactor is Zn(2+).

The enzyme catalyses D-glucose + NAD(+) = D-glucono-1,5-lactone + NADH + H(+). It catalyses the reaction D-glucose + NADP(+) = D-glucono-1,5-lactone + NADPH + H(+). Its function is as follows. Catalyzes the NAD(P)(+)-dependent oxidation of D-glucose to D-gluconate via gluconolactone. To a lesser extent, is also active with xylose as substrate, but mannose, arabinose, galactose, fructose 6-phosphate, glucose 6-phosphate, glycerinaldehyde 3-phosphate, ribose, sorbitol, ethanol, erythritol, or lactose are not oxidized by the enzyme. Can utilize both NAD(+) and NADP(+) as electron acceptor, with a marked preference for NADP(+). Is involved in the degradation of glucose through a non-phosphorylative variant of the Entner-Doudoroff pathway. The chain is Glucose 1-dehydrogenase (gdh) from Thermoproteus tenax (strain ATCC 35583 / DSM 2078 / JCM 9277 / NBRC 100435 / Kra 1).